A 210-amino-acid chain; its full sequence is MTRVLYIEGSPNKDYSASIEVCNAFLDTYRHAHPDHEIQKLDIWNLAIPEFDEAALAAKYAGLSGKALTPSQATAWQRIEQLAAPFHEADKFLFGVPLWNFSIPYKLKHLIDAISQKDVLFTFDGAGFAGKLAGKKAAVIYARGLGYQSPGSFTPAAEFDLQRPYMETWLRFVGVQDVTGIVVERTLFGANGTVDRSRAIDEARTIARTF.

Residues serine 10 and serine 16–serine 18 contribute to the FMN site.

It belongs to the azoreductase type 1 family. In terms of assembly, homodimer. The cofactor is FMN.

The catalysed reaction is 2 a quinone + NADH + H(+) = 2 a 1,4-benzosemiquinone + NAD(+). The enzyme catalyses N,N-dimethyl-1,4-phenylenediamine + anthranilate + 2 NAD(+) = 2-(4-dimethylaminophenyl)diazenylbenzoate + 2 NADH + 2 H(+). In terms of biological role, quinone reductase that provides resistance to thiol-specific stress caused by electrophilic quinones. Functionally, also exhibits azoreductase activity. Catalyzes the reductive cleavage of the azo bond in aromatic azo compounds to the corresponding amines. The polypeptide is FMN-dependent NADH:quinone oxidoreductase 9 (Burkholderia lata (strain ATCC 17760 / DSM 23089 / LMG 22485 / NCIMB 9086 / R18194 / 383)).